A 336-amino-acid polypeptide reads, in one-letter code: Heat-inducible transcription repressor HrcA (336 aa).

Belongs to the HrcA family.

Its function is as follows. Negative regulator of class I heat shock genes (grpE-dnaK-dnaJ and groELS operons). Prevents heat-shock induction of these operons. This is Heat-inducible transcription repressor HrcA from Variovorax paradoxus (strain S110).